Consider the following 713-residue polypeptide: uncharacterized protein (713 aa).

Residues 686–706 form a helical membrane-spanning segment; sequence VWKFNPALYSTITNIFLLIIF.

This sequence belongs to the plectrovirus ORF1 family.

The protein resides in the host membrane. This is an uncharacterized protein from Spiroplasma melliferum (SpV1).